The sequence spans 524 residues: MVLILCCTLAILFCVADVNVFHIFLQMSVWRPSEATVYLPPVPVSKVVSTDEYVSRTSIYYYAGSSRLLAVGNPYFSIKSPNNNKKVLVPKVSGLQYRVFRVRLPDPNKFGFPDTSFYNPDTQRLVWACVGLEIGRGQPLGVGVSGHPYLNKFDDTETSNRYPAQPGSDNRECLSMDYKQTQLCLIGCKPPTGEHWGKGVACNNNAAATDCPPLELFNSIIEDGDMVDTGFGCMDFGTLQANKSDVPIDICNSTCKYPDYLKMASEPYGDSLFFFLRREQMFVRHFFNRAGKLGEAVPDDLYIKGSGNTAVIQSSAFFPTPSGSIVTSESQLFNKPYWLQRAQGHNNGICWGNQLFVTVVDTTRSTNMTLCTEVTKEGTYKNDNFKEYVRHVEEYDLQFVFQLCKITLTAEIMTYIHTMDSNILEDWQFGLTPPPSASLQDTYRFVTSQAITCQKTAPPKEKEDPLNKYTFWEVNLKEKFSADLDQFPLGRKFLLQSGLKAKPRLKRSAPTTRAPSTKRKKVKK.

Positions 501 to 524 (AKPRLKRSAPTTRAPSTKRKKVKK) are disordered.

Belongs to the papillomaviridae L1 protein family. In terms of assembly, self-assembles into homopentamers. The capsid has an icosahedral symmetry and consists of 72 capsomers, with each capsomer being a pentamer of L1. Interacts with the minor capsid protein L2; this interaction is necessary for viral genome encapsidation. Interacts with protein E2; this interaction enhances E2-dependent replication and transcription activation.

It is found in the virion. The protein localises to the host nucleus. Forms an icosahedral capsid with a T=7 symmetry and a 50 nm diameter. The capsid is composed of 72 pentamers linked to each other by disulfide bonds and associated with L2 proteins. Binds to heparan sulfate proteoglycans on cell surface of basal layer keratinocytes to provide initial virion attachment. This binding mediates a conformational change in the virus capsid that facilitates efficient infection. The virion enters the host cell via endocytosis. During virus trafficking, L1 protein dissociates from the viral DNA and the genomic DNA is released to the host nucleus. The virion assembly takes place within the cell nucleus. Encapsulates the genomic DNA together with protein L2. The polypeptide is Major capsid protein L1 (Homo sapiens (Human)).